Reading from the N-terminus, the 285-residue chain is NADPH-dependent 7-cyano-7-deazaguanine reductase (285 aa).

91–93 (IES) lines the substrate pocket. 93–94 (SK) serves as a coordination point for NADPH. C193 acts as the Thioimide intermediate in catalysis. The active-site Proton donor is the D200. Residue 232 to 233 (HE) participates in substrate binding. 261-262 (RG) contributes to the NADPH binding site.

The protein belongs to the GTP cyclohydrolase I family. QueF type 2 subfamily. As to quaternary structure, homodimer.

It localises to the cytoplasm. The catalysed reaction is 7-aminomethyl-7-carbaguanine + 2 NADP(+) = 7-cyano-7-deazaguanine + 2 NADPH + 3 H(+). It participates in tRNA modification; tRNA-queuosine biosynthesis. Functionally, catalyzes the NADPH-dependent reduction of 7-cyano-7-deazaguanine (preQ0) to 7-aminomethyl-7-deazaguanine (preQ1). This is NADPH-dependent 7-cyano-7-deazaguanine reductase from Shewanella frigidimarina (strain NCIMB 400).